A 256-amino-acid chain; its full sequence is Probable aquaporin TIP5-1 (256 aa).

Methionine 1 is modified (N-acetylmethionine). 5 helical membrane passes run 24 to 44 (CYVSEFISTFFFVLAAVGSVM), 57 to 77 (PFGVLIPAIANALALSSSVYI), 89 to 109 (AVTFAMAVAGRISVPTAMFYW), 144 to 164 (FGASVLEGVLAFVLVYTVFTA), and 171 to 191 (LPLAVGPIFIGFVAGANVLAA). The short motif at 87–89 (NPA) is the NPA 1 element. Positions 200 to 202 (NPA) match the NPA 2 motif. The chain crosses the membrane as a helical span at residues 222-242 (VGPLLGGATAALVYDNVVVPV). Serine 249 carries the post-translational modification Phosphoserine.

Belongs to the MIP/aquaporin (TC 1.A.8) family. TIP (TC 1.A.8.10) subfamily.

The protein resides in the membrane. Potential aquaporin, which may facilitate the transport of water and small neutral solutes across cell membranes. The polypeptide is Probable aquaporin TIP5-1 (TIP5-1) (Arabidopsis thaliana (Mouse-ear cress)).